We begin with the raw amino-acid sequence, 265 residues long: NAD kinase 2 (265 aa).

Aspartate 51 serves as the catalytic Proton acceptor. Residues 51-52, 122-123, arginine 149, aspartate 151, 162-167, and alanine 186 each bind NAD(+); these read DG, NE, and TAYNKS.

It belongs to the NAD kinase family. The cofactor is a divalent metal cation.

It is found in the cytoplasm. It catalyses the reaction NAD(+) + ATP = ADP + NADP(+) + H(+). In terms of biological role, involved in the regulation of the intracellular balance of NAD and NADP, and is a key enzyme in the biosynthesis of NADP. Catalyzes specifically the phosphorylation on 2'-hydroxyl of the adenosine moiety of NAD to yield NADP. The protein is NAD kinase 2 of Bacillus licheniformis (strain ATCC 14580 / DSM 13 / JCM 2505 / CCUG 7422 / NBRC 12200 / NCIMB 9375 / NCTC 10341 / NRRL NRS-1264 / Gibson 46).